A 598-amino-acid polypeptide reads, in one-letter code: Aspartate--tRNA(Asp/Asn) ligase (598 aa).

Position 172 (Glu-172) interacts with L-aspartate. The tract at residues Gln-196–Lys-199 is aspartate. Arg-218 provides a ligand contact to L-aspartate. ATP is bound by residues Arg-218–Glu-220 and Gln-227. Residue His-455 coordinates L-aspartate. Glu-489 contributes to the ATP binding site. Residue Arg-496 participates in L-aspartate binding. Gly-541–Arg-544 lines the ATP pocket.

This sequence belongs to the class-II aminoacyl-tRNA synthetase family. Type 1 subfamily. In terms of assembly, homodimer.

The protein resides in the cytoplasm. It catalyses the reaction tRNA(Asx) + L-aspartate + ATP = L-aspartyl-tRNA(Asx) + AMP + diphosphate. Functionally, aspartyl-tRNA synthetase with relaxed tRNA specificity since it is able to aspartylate not only its cognate tRNA(Asp) but also tRNA(Asn). Reaction proceeds in two steps: L-aspartate is first activated by ATP to form Asp-AMP and then transferred to the acceptor end of tRNA(Asp/Asn). The protein is Aspartate--tRNA(Asp/Asn) ligase of Burkholderia mallei (strain ATCC 23344).